The primary structure comprises 267 residues: Energy-coupling factor transporter transmembrane protein EcfT (267 aa).

5 helical membrane-spanning segments follow: residues 26 to 46 (IILT…WGYL), 73 to 93 (ILFI…GTVI), 116 to 136 (LFLL…IALT), 151 to 171 (VPVH…PTLL), and 247 to 267 (LVTG…YVFF).

The protein belongs to the energy-coupling factor EcfT family. In terms of assembly, forms a stable energy-coupling factor (ECF) transporter complex composed of 2 membrane-embedded substrate-binding proteins (S component), 2 ATP-binding proteins (A component) and 2 transmembrane proteins (T component). May be able to interact with more than 1 S component at a time.

It localises to the cell membrane. Functionally, transmembrane (T) component of an energy-coupling factor (ECF) ABC-transporter complex. Unlike classic ABC transporters this ECF transporter provides the energy necessary to transport a number of different substrates. The sequence is that of Energy-coupling factor transporter transmembrane protein EcfT from Ruminiclostridium cellulolyticum (strain ATCC 35319 / DSM 5812 / JCM 6584 / H10) (Clostridium cellulolyticum).